We begin with the raw amino-acid sequence, 39 residues long: Large ribosomal subunit protein bL36 (39 aa).

This sequence belongs to the bacterial ribosomal protein bL36 family.

The polypeptide is Large ribosomal subunit protein bL36 (Limosilactobacillus reuteri (strain DSM 20016) (Lactobacillus reuteri)).